A 691-amino-acid chain; its full sequence is Elongation factor G (691 aa).

The tr-type G domain occupies 8–283 (DMQRNIGIMA…AVVDFLPSPV (276 aa)). Residues 17–24 (AHIDAGKT), 81–85 (DTPGH), and 135–138 (NKMD) contribute to the GTP site.

The protein belongs to the TRAFAC class translation factor GTPase superfamily. Classic translation factor GTPase family. EF-G/EF-2 subfamily.

The protein localises to the cytoplasm. In terms of biological role, catalyzes the GTP-dependent ribosomal translocation step during translation elongation. During this step, the ribosome changes from the pre-translocational (PRE) to the post-translocational (POST) state as the newly formed A-site-bound peptidyl-tRNA and P-site-bound deacylated tRNA move to the P and E sites, respectively. Catalyzes the coordinated movement of the two tRNA molecules, the mRNA and conformational changes in the ribosome. The sequence is that of Elongation factor G from Nitratidesulfovibrio vulgaris (strain ATCC 29579 / DSM 644 / CCUG 34227 / NCIMB 8303 / VKM B-1760 / Hildenborough) (Desulfovibrio vulgaris).